A 229-amino-acid polypeptide reads, in one-letter code: Small ribosomal subunit protein uS3 (229 aa).

The 69-residue stretch at V39 to R107 folds into the KH type-2 domain.

It belongs to the universal ribosomal protein uS3 family. In terms of assembly, part of the 30S ribosomal subunit. Forms a tight complex with proteins S10 and S14.

Binds the lower part of the 30S subunit head. Binds mRNA in the 70S ribosome, positioning it for translation. The chain is Small ribosomal subunit protein uS3 from Shewanella denitrificans (strain OS217 / ATCC BAA-1090 / DSM 15013).